A 248-amino-acid chain; its full sequence is 14-3-3-like protein G-BOX factor 14 lambda (248 aa).

Ser70, Ser112, and Ser193 each carry phosphoserine; by CRPK1. Phosphothreonine; by CRPK1 is present on Thr214.

Belongs to the 14-3-3 family. Interacts with SERK1 in the cell membrane. Component of the SERK1 signaling complex, composed of KAPP, CDC48A, GRF6 or GRF7, SERK1, SERK2, SERK3/BAK1 and BRI1. Interacts with TPK1. Interacts with ADF1. Binds to CRPK1 at the plasma membrane. Interacts with DREB1A and DREB1B in the nucleus when activated by CRPK1-mediated phosphorylation upon freezing. Interacts with CINV1. Binds to the N-terminal region of B1L. Post-translationally, transphosphorylated by SERK1. Phosphorylated by CRPK1 in response to cold.

The protein localises to the nucleus. It is found in the cell membrane. It localises to the cytoplasm. In terms of biological role, is associated with a DNA binding complex that binds to the G box, a well-characterized cis-acting DNA regulatory element found in plant genes. Specific negative regulator of slow-vacuolar (SV) ion channel. Mediates F-actin dynamics possibly through inhibiting ADF1 phosphorylation. Negative regulator of freezing tolerance that modulates cold-responsive C-repeat-binding factors (CBF) DREB1A and DREB1B proteins stability by facilitating their ubiquitin-mediated degradation when activated by CRPK1-mediated phosphorylation in freezing conditions; this processus is counteracted by B1L. This chain is 14-3-3-like protein G-BOX factor 14 lambda, found in Arabidopsis thaliana (Mouse-ear cress).